The following is a 127-amino-acid chain: Large ribosomal subunit protein bL17 (127 aa).

This sequence belongs to the bacterial ribosomal protein bL17 family. As to quaternary structure, part of the 50S ribosomal subunit. Contacts protein L32.

The polypeptide is Large ribosomal subunit protein bL17 (Haemophilus ducreyi (strain 35000HP / ATCC 700724)).